We begin with the raw amino-acid sequence, 236 residues long: Biosynthetic peptidoglycan transglycosylase (236 aa).

Residues 12–31 (ALLWFAAGSVLVVLVLRWVP) traverse the membrane as a helical segment.

Belongs to the glycosyltransferase 51 family.

It localises to the cell inner membrane. It catalyses the reaction [GlcNAc-(1-&gt;4)-Mur2Ac(oyl-L-Ala-gamma-D-Glu-L-Lys-D-Ala-D-Ala)](n)-di-trans,octa-cis-undecaprenyl diphosphate + beta-D-GlcNAc-(1-&gt;4)-Mur2Ac(oyl-L-Ala-gamma-D-Glu-L-Lys-D-Ala-D-Ala)-di-trans,octa-cis-undecaprenyl diphosphate = [GlcNAc-(1-&gt;4)-Mur2Ac(oyl-L-Ala-gamma-D-Glu-L-Lys-D-Ala-D-Ala)](n+1)-di-trans,octa-cis-undecaprenyl diphosphate + di-trans,octa-cis-undecaprenyl diphosphate + H(+). It participates in cell wall biogenesis; peptidoglycan biosynthesis. Peptidoglycan polymerase that catalyzes glycan chain elongation from lipid-linked precursors. This chain is Biosynthetic peptidoglycan transglycosylase, found in Pseudomonas syringae pv. syringae (strain B728a).